The chain runs to 197 residues: FMN-dependent NADH:quinone oxidoreductase (197 aa).

FMN-binding positions include Ser10 and Ser17–Ser19.

This sequence belongs to the azoreductase type 1 family. As to quaternary structure, homodimer. FMN is required as a cofactor.

It catalyses the reaction 2 a quinone + NADH + H(+) = 2 a 1,4-benzosemiquinone + NAD(+). It carries out the reaction N,N-dimethyl-1,4-phenylenediamine + anthranilate + 2 NAD(+) = 2-(4-dimethylaminophenyl)diazenylbenzoate + 2 NADH + 2 H(+). In terms of biological role, quinone reductase that provides resistance to thiol-specific stress caused by electrophilic quinones. Functionally, also exhibits azoreductase activity. Catalyzes the reductive cleavage of the azo bond in aromatic azo compounds to the corresponding amines. The chain is FMN-dependent NADH:quinone oxidoreductase from Mycoplasmoides gallisepticum (strain R(low / passage 15 / clone 2)) (Mycoplasma gallisepticum).